A 629-amino-acid polypeptide reads, in one-letter code: MGYNAGSYDVIVIGAGHAGCEAGLAAARMGSKTLMLTINLDMVAFMPCNPSVGGPAKGIVVREIDALGGEMGRNIDKTHIQMRMLNTGKGPAVRALRAQADKFSYQHELKKTIEETPNLTLFQGMVERLIVEDGECKGVITQAGAEYTAKTVVITTGTFLRGEIIMGDLKYSSGPNNQQPSITLSEHLEELGFDLVRFKTGTPPRVNSNTIDYSKTEIQPGDDKPRAFSFETTKFIMDQIPCWLTYTSTETHRLIDENLHRSAMYSGMIKGTGPRYCPSIEDKVVRFNDKPRHQIFLEPEGRNTQEVYVQGLSTSLPEDVQRDMLRTIPGLENVEMMRTGYAIEYDAIVPTQLWPTLETKKIKNLYTAGQINGTSGYEEAAGQGLMAGINAACRSLGKKEVILGREDAYIGVLIDDLVTKGTNEPYRLLTSRAEYRLLLRHDNADLRLTEVGHEIGLITEERYERFTNKKLQIEQEKERLSSIIIKPRPEVQELIRNIGGSELKDGIRASDLLRRPEMTYEHIHLLVPSEVELSDEVKEQVEIQIKYEGYIEKSLQQVERMKKMENKKIPVDIDYDAISSLASEARQKLKDVRPLSMGQASRISGVNPADISILLVYIEQGKIARVSNQ.

Residues 14-19 (GAGHAG), valine 126, and serine 181 each bind FAD. Residue 273-287 (GPRYCPSIEDKVVRF) participates in NAD(+) binding. Position 370 (glutamine 370) interacts with FAD.

The protein belongs to the MnmG family. In terms of assembly, homodimer. Heterotetramer of two MnmE and two MnmG subunits. The cofactor is FAD.

The protein resides in the cytoplasm. In terms of biological role, NAD-binding protein involved in the addition of a carboxymethylaminomethyl (cmnm) group at the wobble position (U34) of certain tRNAs, forming tRNA-cmnm(5)s(2)U34. The polypeptide is tRNA uridine 5-carboxymethylaminomethyl modification enzyme MnmG (Bacillus thuringiensis (strain Al Hakam)).